A 477-amino-acid polypeptide reads, in one-letter code: Delayed-rectifier potassium channel regulatory subunit KCNS2 (477 aa).

Residues M1–V184 lie on the Cytoplasmic side of the membrane. Residues L185–L206 form a helical membrane-spanning segment. Residues N207–P225 are Extracellular-facing. Residues R226–V248 traverse the membrane as a helical segment. Residues A249–A259 lie on the Cytoplasmic side of the membrane. A helical transmembrane segment spans residues L260–V280. Over V281–L290 the chain is Extracellular. The helical; Voltage-sensor transmembrane segment at G291 to H311 threads the bilayer. Over S312–Y326 the chain is Cytoplasmic. A helical membrane pass occupies residues K327–Y348. Over T349 to I361 the chain is Extracellular. Residues P362–T373 constitute an intramembrane region (helical). Residues T374–D379 carry the Selectivity filter motif. An intramembrane segment occupies T374–V381. Topologically, residues P382–K388 are extracellular. Residues L389 to Y417 traverse the membrane as a helical segment. Residues R418–R477 are Cytoplasmic-facing.

Belongs to the potassium channel family. S (TC 1.A.1.2) subfamily. Kv9.2/KCNS2 sub-subfamily. As to quaternary structure, heterotetramer with KCNB1 and KCNB2. Does not form homomultimers.

The protein resides in the cell membrane. Its function is as follows. Potassium channel regulatory subunit that modulate the delayed rectifier voltage-gated potassium channel activity of KCNB1 and KCNB2 by altering their kinetics, expression levels, and shifting the half-inactivation potential to more polarized values. While it does not form functional channels on its own, it can form functional heterotetrameric channels with KCNB1 and KCNB2. Each regulatory subunit has unique regulatory properties that can lead to extensive inhibition, significant changes in kinetics, and/or substantial shifts in the voltage dependencies of the inactivation process. This is Delayed-rectifier potassium channel regulatory subunit KCNS2 from Homo sapiens (Human).